Consider the following 81-residue polypeptide: UPF0248 protein TK0315 (81 aa).

Belongs to the UPF0248 family.

This chain is UPF0248 protein TK0315, found in Thermococcus kodakarensis (strain ATCC BAA-918 / JCM 12380 / KOD1) (Pyrococcus kodakaraensis (strain KOD1)).